A 427-amino-acid polypeptide reads, in one-letter code: Enolase 2 (427 aa).

Q165 is a binding site for (2R)-2-phosphoglycerate. Residue E207 is the Proton donor of the active site. Residues D244, E287, and D314 each contribute to the Mg(2+) site. Residues K339, R368, S369, and K390 each coordinate (2R)-2-phosphoglycerate. K339 functions as the Proton acceptor in the catalytic mechanism.

This sequence belongs to the enolase family. As to quaternary structure, component of the RNA degradosome, a multiprotein complex involved in RNA processing and mRNA degradation. Mg(2+) is required as a cofactor.

It localises to the cytoplasm. The protein resides in the secreted. The protein localises to the cell surface. It carries out the reaction (2R)-2-phosphoglycerate = phosphoenolpyruvate + H2O. Its pathway is carbohydrate degradation; glycolysis; pyruvate from D-glyceraldehyde 3-phosphate: step 4/5. Functionally, catalyzes the reversible conversion of 2-phosphoglycerate (2-PG) into phosphoenolpyruvate (PEP). It is essential for the degradation of carbohydrates via glycolysis. This chain is Enolase 2, found in Pseudomonas syringae pv. tomato (strain ATCC BAA-871 / DC3000).